A 31-amino-acid polypeptide reads, in one-letter code: Photosystem I reaction center subunit XII (31 aa).

The helical transmembrane segment at 7–26 (QVYVALVIALLPAVLAFRLS) threads the bilayer.

This sequence belongs to the PsaM family.

It is found in the cellular thylakoid membrane. In Thermosynechococcus vestitus (strain NIES-2133 / IAM M-273 / BP-1), this protein is Photosystem I reaction center subunit XII.